A 693-amino-acid chain; its full sequence is Elongation factor G (693 aa).

Residues 8-283 (NRCRNIGIMA…AVVDYLPSPL (276 aa)) form the tr-type G domain. Residues 17-24 (AHIDAGKT), 81-85 (DTPGH), and 135-138 (NKMD) contribute to the GTP site.

The protein belongs to the TRAFAC class translation factor GTPase superfamily. Classic translation factor GTPase family. EF-G/EF-2 subfamily.

It localises to the cytoplasm. Functionally, catalyzes the GTP-dependent ribosomal translocation step during translation elongation. During this step, the ribosome changes from the pre-translocational (PRE) to the post-translocational (POST) state as the newly formed A-site-bound peptidyl-tRNA and P-site-bound deacylated tRNA move to the P and E sites, respectively. Catalyzes the coordinated movement of the two tRNA molecules, the mRNA and conformational changes in the ribosome. In Acidobacterium capsulatum (strain ATCC 51196 / DSM 11244 / BCRC 80197 / JCM 7670 / NBRC 15755 / NCIMB 13165 / 161), this protein is Elongation factor G.